We begin with the raw amino-acid sequence, 1481 residues long: Cystic fibrosis transmembrane conductance regulator (1481 aa).

Topologically, residues 1–77 (MQRSPLEKAS…KLINALRRCF (77 aa)) are cytoplasmic. A helical membrane pass occupies residues 78-98 (FWRFMFYGILLYLGEVTKAVQ). One can recognise an ABC transmembrane type-1 1 domain in the interval 81–365 (FMFYGILLYL…WAVQTWYDSL (285 aa)). Topologically, residues 99-122 (PLLLGRIIASYDPDNKEERSIAIY) are extracellular. A helical membrane pass occupies residues 123–146 (LGIGLCLLFIVRTLLLHPAIFGLH). Residues 147–195 (HIGMQMRIAMFSLIYKKTLKLSSRVLDKISIGQLVSLLSNNLNKFDEGL) lie on the Cytoplasmic side of the membrane. Residues 196–216 (ALAHFVWIVPLQVALLMGLIW) traverse the membrane as a helical segment. Over 217 to 222 (ELLQAS) the chain is Extracellular. The helical transmembrane segment at 223 to 243 (AFCGLGFLIVLALFQAGLGRM) threads the bilayer. Topologically, residues 244–298 (MMKYRDQRAGKINERLVITSEMIENIQSVKAYCWEEAMEKMIENLRQTELKLTRK) are cytoplasmic. The chain crosses the membrane as a helical span at residues 299–319 (AAYVRYFNSSAFFFSGFFVVF). At 320 to 339 (LSVLPYALIKGIVLRKIFTT) the chain is on the extracellular side. The chain crosses the membrane as a helical span at residues 340–358 (ISFCIVLRMAVTRQFPWAV). Residues 359–858 (QTWYDSLGAI…YLRYITVHKS (500 aa)) are Cytoplasmic-facing. ATP contacts are provided by residues Trp401, Ser434, 458 to 465 (GSTGAGKT), and Gln493. An ABC transporter 1 domain is found at 423-646 (NDDDSLFFSN…RPDFSSKLMG (224 aa)). The S-palmitoyl cysteine moiety is linked to residue Cys524. A phosphoserine mark is found at Ser549 and Ser660. The tract at residues 654-831 (SAERRNSILT…EEINEEDLKE (178 aa)) is disordered R region. Ser670 is subject to Phosphoserine; by PKA. A Phosphoserine modification is found at Ser686. Lys688 is covalently cross-linked (Glycyl lysine isopeptide (Lys-Gly) (interchain with G-Cter in ubiquitin)). Residues Ser700 and Ser712 each carry the phosphoserine modification. The residue at position 717 (Thr717) is a Phosphothreonine. Ser737, Ser753, Ser768, Ser790, Ser795, and Ser813 each carry phosphoserine. A helical transmembrane segment spans residues 859–879 (LIFVLIWCLVIFLAEVAASLV). Residues 859–1155 (LIFVLIWCLV…AVNSSIDVDS (297 aa)) enclose the ABC transmembrane type-1 2 domain. Over 880-918 (VLWFLGNTPPQDKGNSTYSRNNSYAVIITRTSSYYVFYI) the chain is Extracellular. Residues Asn894 and Asn900 are each glycosylated (N-linked (GlcNAc...) asparagine). Residues 919 to 939 (YVGVADTLLAMGFFRGLPLVH) traverse the membrane as a discontinuously helical segment. Residues 940–990 (TLITVSKILHHKMLHSVLQAPMSTLNTLKAGGILNRFSKDIAILDDLLPLT) are Cytoplasmic-facing. A helical membrane pass occupies residues 991–1011 (IFDFIQLLLIVIGAIAVVAVL). The Extracellular segment spans residues 1012 to 1013 (QP). A helical membrane pass occupies residues 1014 to 1034 (YIFVATVPVIVAFIMLRAYFL). The Cytoplasmic portion of the chain corresponds to 1035-1095 (QTSQQLKQLE…TANWFLYLST (61 aa)). The helical transmembrane segment at 1096–1116 (LRWFQMRIEMIFVIFFIAVTF) threads the bilayer. The Extracellular segment spans residues 1117–1130 (ISILTTGEGEGTVG). Residues 1131–1151 (IILTLAMNIMSTLQWAVNSSI) traverse the membrane as a helical segment. Over 1152–1481 (DVDSLMRSVS…TEEEVQDTRL (330 aa)) the chain is Cytoplasmic. In terms of domain architecture, ABC transporter 2 spans 1211-1444 (MTVKDLTAKY…RSLFQQAISP (234 aa)). ATP-binding positions include Tyr1220 and 1245-1252 (GRTGSGKS). The interaction with GORASP2 stretch occupies residues 1387–1481 (RTLKQAFADC…TEEEVQDTRL (95 aa)). Residue Cys1396 is the site of S-palmitoyl cysteine attachment. Phosphoserine occurs at positions 1445 and 1457. The PDZ-binding signature appears at 1479–1481 (TRL).

Belongs to the ABC transporter superfamily. ABCC family. CFTR transporter (TC 3.A.1.202) subfamily. As to quaternary structure, monomer; does not require oligomerization for channel activity. May form oligomers in the membrane. Interacts with SLC26A3, SLC26A6 and NHERF1. Interacts with SHANK2. Interacts with MYO6. Interacts (via C-terminus) with GOPC (via PDZ domain); this promotes CFTR internalization and thereby decreases channel activity. Interacts with SLC4A7 through NHERF1. Found in a complex with MYO5B and RAB11A. Interacts with ANO1. Interacts with SLC26A8. Interacts with AHCYL1; the interaction increases CFTR activity. Interacts with CSE1L. The core-glycosylated form interacts with GORASP2 (via PDZ GRASP-type 1 domain) in respone to ER stress. Interacts with MARCHF2; the interaction leads to CFTR ubiqtuitination and degradation. Interacts with ADGRG2. Post-translationally, N-glycosylated. Phosphorylated; cAMP treatment promotes phosphorylation and activates the channel. Dephosphorylation decreases the ATPase activity (in vitro). Phosphorylation at PKA sites activates the channel. Phosphorylation at PKC sites enhances the response to phosphorylation by PKA. Phosphorylated by AMPK; this inhibits channel activity. In terms of processing, ubiquitinated, leading to its degradation in the lysosome. Deubiquitination by USP10 in early endosomes enhances its endocytic recycling to the cell membrane. Ubiquitinated by RNF185 during ER stress. Ubiquitinated by MARCHF2.

The protein resides in the apical cell membrane. It localises to the early endosome membrane. The protein localises to the cell membrane. Its subcellular location is the recycling endosome membrane. It is found in the endoplasmic reticulum membrane. The protein resides in the nucleus. It catalyses the reaction ATP + H2O + closed Cl(-) channel = ADP + phosphate + open Cl(-) channel.. The enzyme catalyses chloride(in) = chloride(out). The catalysed reaction is hydrogencarbonate(in) = hydrogencarbonate(out). It carries out the reaction ATP + H2O = ADP + phosphate + H(+). Its function is as follows. Epithelial ion channel that plays an important role in the regulation of epithelial ion and water transport and fluid homeostasis. Mediates the transport of chloride ions across the cell membrane. Possesses an intrinsic ATPase activity and utilizes ATP to gate its channel; the passive flow of anions through the channel is gated by cycles of ATP binding and hydrolysis by the ATP-binding domains. The ion channel is also permeable to HCO(3)(-); selectivity depends on the extracellular chloride concentration. Exerts its function also by modulating the activity of other ion channels and transporters. Contributes to the regulation of the pH and the ion content of the epithelial fluid layer. Modulates the activity of the epithelial sodium channel (ENaC) complex, in part by regulating the cell surface expression of the ENaC complex. May regulate bicarbonate secretion and salvage in epithelial cells by regulating the transporter SLC4A7. Can inhibit the chloride channel activity of ANO1. Plays a role in the chloride and bicarbonate homeostasis during sperm epididymal maturation and capacitation. The sequence is that of Cystic fibrosis transmembrane conductance regulator from Macaca nemestrina (Pig-tailed macaque).